An 82-amino-acid polypeptide reads, in one-letter code: RNA-binding protein BPUM_0095 (82 aa).

This sequence belongs to the eukaryotic ribosomal protein eL8 family.

The chain is RNA-binding protein BPUM_0095 from Bacillus pumilus (strain SAFR-032).